The following is a 318-amino-acid chain: Myoblast determination protein 1 (318 aa).

Met1 participates in a covalent cross-link: Peptide (Met-Gly) (interchain with G-Cter in ubiquitin). At Lys104 the chain carries N6-methyllysine; by EHMT2. Residues 109–160 (DRRKAATMRERRRLSKVNEAFETLKRCTSSNPNQRLPKVEILRNAIRYIEGL) enclose the bHLH domain. Disordered stretches follow at residues 174–224 (AAAA…RRRN) and 266–318 (APAL…YQVL). The span at 197–207 (SDASSPRSNCS) shows a compositional bias: polar residues. Low complexity predominate over residues 266-276 (APALLLADAPP).

Efficient DNA binding requires dimerization with another bHLH protein. Seems to form active heterodimers with ITF-2. Interacts with SUV39H1. Interacts with DDX5. Interacts with CHD2. Interacts with TSC22D3. Interacts with SETD3. Interacts with P-TEFB complex; promotes the transcriptional activity of MYOD1 through its CDK9-mediated phosphorylation. Interacts with CSRP3. Interacts with NUPR1. In terms of processing, phosphorylated by CDK9. This phosphorylation promotes its function in muscle differentiation. Post-translationally, acetylated by a complex containing EP300 and PCAF. The acetylation is essential to activate target genes. Conversely, its deacetylation by SIRT1 inhibits its function. Ubiquitinated on the N-terminus; which is required for proteasomal degradation. In terms of processing, methylation at Lys-104 by EHMT2/G9a inhibits myogenic activity.

It localises to the nucleus. Acts as a transcriptional activator that promotes transcription of muscle-specific target genes and plays a role in muscle differentiation. Together with MYF5 and MYOG, co-occupies muscle-specific gene promoter core region during myogenesis. Induces fibroblasts to differentiate into myoblasts. Interacts with and is inhibited by the twist protein. This interaction probably involves the basic domains of both proteins. This is Myoblast determination protein 1 (MYOD1) from Bos taurus (Bovine).